Consider the following 276-residue polypeptide: 3-methyl-2-oxobutanoate hydroxymethyltransferase (276 aa).

Asp-44 and Asp-83 together coordinate Mg(2+). 3-methyl-2-oxobutanoate contacts are provided by residues 44-45 (DS), Asp-83, and Lys-113. Residue Glu-115 participates in Mg(2+) binding. Residue Glu-182 is the Proton acceptor of the active site.

The protein belongs to the PanB family. In terms of assembly, homodecamer; pentamer of dimers. Requires Mg(2+) as cofactor.

The protein resides in the cytoplasm. It carries out the reaction 3-methyl-2-oxobutanoate + (6R)-5,10-methylene-5,6,7,8-tetrahydrofolate + H2O = 2-dehydropantoate + (6S)-5,6,7,8-tetrahydrofolate. It participates in cofactor biosynthesis; (R)-pantothenate biosynthesis; (R)-pantoate from 3-methyl-2-oxobutanoate: step 1/2. Functionally, catalyzes the reversible reaction in which hydroxymethyl group from 5,10-methylenetetrahydrofolate is transferred onto alpha-ketoisovalerate to form ketopantoate. The sequence is that of 3-methyl-2-oxobutanoate hydroxymethyltransferase from Clostridium acetobutylicum (strain ATCC 824 / DSM 792 / JCM 1419 / IAM 19013 / LMG 5710 / NBRC 13948 / NRRL B-527 / VKM B-1787 / 2291 / W).